Reading from the N-terminus, the 277-residue chain is Large ribosomal subunit protein uL2 (277 aa).

The segment at 199–277 (DHMNTSVGKA…ILISRHKRKK (79 aa)) is disordered. A compositionally biased stretch (basic residues) spans 209 to 220 (GRTRWMGRRPHN).

Belongs to the universal ribosomal protein uL2 family. Part of the 50S ribosomal subunit. Forms a bridge to the 30S subunit in the 70S ribosome.

In terms of biological role, one of the primary rRNA binding proteins. Required for association of the 30S and 50S subunits to form the 70S ribosome, for tRNA binding and peptide bond formation. It has been suggested to have peptidyltransferase activity; this is somewhat controversial. Makes several contacts with the 16S rRNA in the 70S ribosome. The sequence is that of Large ribosomal subunit protein uL2 from Nitrobacter winogradskyi (strain ATCC 25391 / DSM 10237 / CIP 104748 / NCIMB 11846 / Nb-255).